The chain runs to 599 residues: Beta-myrcene synthase, chloroplastic (599 aa).

A chloroplast-targeting transit peptide spans 1 to 34; that stretch reads MWSTISISMNVAILKKPLNFLHNSNNKASNPRCV. 5 residues coordinate Mg(2+): Asp352, Asp356, Asp496, Thr500, and Glu504. The DDXXD motif motif lies at 352–356; sequence DDVYD.

Belongs to the terpene synthase family. Mg(2+) serves as cofactor. The cofactor is Mn(2+).

Its subcellular location is the plastid. It is found in the chloroplast. The catalysed reaction is (2E)-geranyl diphosphate = beta-myrcene + diphosphate. The protein operates within secondary metabolite biosynthesis; terpenoid biosynthesis. In terms of biological role, monoterpene synthase that catalyzes the formation of beta-myrcene from geranyl diphosphate. The chain is Beta-myrcene synthase, chloroplastic (MYS) from Ocimum basilicum (Sweet basil).